Here is a 541-residue protein sequence, read N- to C-terminus: Myrosinase 1 (541 aa).

Residues 1–19 form the signal peptide; that stretch reads MKLLMLAFVFLLALATCKG. 3 disulfides stabilise this stretch: Cys24–Cys449, Cys32–Cys445, and Cys224–Cys232. The N-linked (GlcNAc...) asparagine glycan is linked to Asn33. Gln57 lines the a beta-D-glucoside pocket. N-linked (GlcNAc...) asparagine glycosylation occurs at Asn108. Residue His159 participates in a beta-D-glucoside binding. Residue Asn175 is glycosylated (N-linked (GlcNAc...) asparagine). An a beta-D-glucoside-binding site is contributed by 204 to 205; it reads NQ. The N-linked (GlcNAc...) asparagine glycan is linked to Asn236. Tyr348 contributes to the a beta-D-glucoside binding site. 2 N-linked (GlcNAc...) asparagine glycosylation sites follow: Asn356 and Asn379. Residues Glu420, Trp468, 475–476, and Phe484 contribute to the a beta-D-glucoside site; that span reads EF. Catalysis depends on Glu420, which acts as the Nucleophile. 2 N-linked (GlcNAc...) asparagine glycosylation sites follow: Asn493 and Asn512.

The protein belongs to the glycosyl hydrolase 1 family. As to quaternary structure, homodimer. Expressed in guard cells, phloem-associated cells and myrosin cells.

It is found in the vacuole. It carries out the reaction a thioglucoside + H2O = a sugar + a thiol.. It catalyses the reaction Hydrolysis of terminal, non-reducing beta-D-glucosyl residues with release of beta-D-glucose.. Its function is as follows. Degradation of glucosinolates (glucose residue linked by a thioglucoside bound to an amino acid derivative) to glucose, sulfate and any of the products: thiocyanates, isothiocyanates, nitriles, epithionitriles or oxazolidine-2-thiones. These toxic degradation products can deter insect herbivores. Seems to function in abscisic acid (ABA) and methyl jasmonate (MeJA) signaling in guard cells. Functionally redundant with TGG2. Hydrolyzes sinigrin and, with lower efficiency, p-nitrophenyl beta-D-glucoside. This is Myrosinase 1 from Arabidopsis thaliana (Mouse-ear cress).